The sequence spans 343 residues: S-adenosylmethionine:tRNA ribosyltransferase-isomerase (343 aa).

It belongs to the QueA family. As to quaternary structure, monomer.

The protein localises to the cytoplasm. It carries out the reaction 7-aminomethyl-7-carbaguanosine(34) in tRNA + S-adenosyl-L-methionine = epoxyqueuosine(34) in tRNA + adenine + L-methionine + 2 H(+). The protein operates within tRNA modification; tRNA-queuosine biosynthesis. Functionally, transfers and isomerizes the ribose moiety from AdoMet to the 7-aminomethyl group of 7-deazaguanine (preQ1-tRNA) to give epoxyqueuosine (oQ-tRNA). In Pseudoalteromonas translucida (strain TAC 125), this protein is S-adenosylmethionine:tRNA ribosyltransferase-isomerase.